The chain runs to 442 residues: Betaine reductase complex component B subunit alpha (442 aa).

In terms of assembly, heterotetramer of two alpha and two beta subunits. Component of the betaine reductase complex, together with components A and C. PB is substrate specific.

It carries out the reaction acetyl phosphate + trimethylamine + [thioredoxin]-disulfide + H2O = glycine betaine + [thioredoxin]-dithiol + phosphate + H(+). Functionally, in the first step of betaine reductase, the substrate is bound to component PB via a Schiff base intermediate. Then the PB-activated substrate is nucleophilically attacked by the selenol anion of component PA to transform it to a carboxymethylated selenoether and the respective amine. By action of component PC, acetyl phosphate is formed, leaving component PA in its oxidized state. Finally component PA becomes reduced by the thioredoxin system to start a new catalytic cycle of reductive deamination. The polypeptide is Betaine reductase complex component B subunit alpha (grdI) (Peptoclostridium acidaminophilum (Eubacterium acidaminophilum)).